A 78-amino-acid polypeptide reads, in one-letter code: MKGTFLICLILIAGFSFKSTQAGSICLEPKVVGPCTAYFRRFYFDSETGKCTVFIYGGCEGNGNNFETLRACRAICRA.

The first 22 residues, 1–22 (MKGTFLICLILIAGFSFKSTQA), serve as a signal peptide directing secretion. The region spanning 26–76 (CLEPKVVGPCTAYFRRFYFDSETGKCTVFIYGGCEGNGNNFETLRACRAIC) is the BPTI/Kunitz inhibitor domain. Cystine bridges form between Cys26/Cys76, Cys35/Cys59, and Cys51/Cys72.

Belongs to the venom Kunitz-type family. Sea anemone type 2 potassium channel toxin subfamily.

It localises to the secreted. Its subcellular location is the nematocyst. Its function is as follows. This protease inhibitor shows two different activities, it inhibits both the capsaicin receptor TRPV1 and serine proteases. It partially (max 50%) and reversibly inhibits capsaicin-induced response of TRPV1 (IC(50)=54 nM), a receptor of the pain pathway. The second activity is a weak inhibition of trypsin and chymotrypsin activity (Ki=1 uM and Ki=5 uM, respectively). In vivo, it shows antinociceptive and analgesic activities. It significantly prolongs tail-flick latency and reduces capsaicin-induced acute pain. In vivo, unlike other TRPV1 antagonists whose activity is associated with hyperthermia, this protein has the remarkable feature of dropping core body temperature. The sequence is that of TauPI-stichotoxin-Hcr2b from Radianthus crispa (Leathery sea anemone).